The sequence spans 302 residues: tRNA dimethylallyltransferase (302 aa).

2–9 (GPTACGKS) contributes to the ATP binding site. Residue 4–9 (TACGKS) participates in substrate binding. Interaction with substrate tRNA stretches follow at residues 27-30 (DSAL) and 149-153 (QRLIR).

The protein belongs to the IPP transferase family. Monomer. Mg(2+) serves as cofactor.

The enzyme catalyses adenosine(37) in tRNA + dimethylallyl diphosphate = N(6)-dimethylallyladenosine(37) in tRNA + diphosphate. Catalyzes the transfer of a dimethylallyl group onto the adenine at position 37 in tRNAs that read codons beginning with uridine, leading to the formation of N6-(dimethylallyl)adenosine (i(6)A). The chain is tRNA dimethylallyltransferase from Buchnera aphidicola subsp. Acyrthosiphon pisum (strain 5A).